The following is a 179-amino-acid chain: Coiled-coil domain-containing protein 32 (179 aa).

A disordered region spans residues 36–65 (DNAFSDSFMDSHPAGESHTAAADSAVQPAG). Residues 75–98 (EVYLASLEKKLRRIKGLNEEVTSK) adopt a coiled-coil conformation. The tract at residues 158–179 (LIPPESQAEKPEAGDKPAAAEQ) is disordered.

Interacts with AP2S1; the interaction is direct and mediates association with adaptor protein complex 2 (AP-2).

It localises to the membrane. Its subcellular location is the coated pit. Its function is as follows. Regulates clathrin-mediated endocytsois of cargos such as transferrin probably through the association and modulation of adaptor protein complex 2 (AP-2). Has a role in ciliogenesis. Required for proper cephalic and left/right axis development. The sequence is that of Coiled-coil domain-containing protein 32 (Ccdc32) from Mus musculus (Mouse).